The following is a 286-amino-acid chain: NADPH-dependent 7-cyano-7-deazaguanine reductase (286 aa).

Residue 92–94 (IES) coordinates substrate. Residue 94–95 (SK) coordinates NADPH. Cysteine 194 (thioimide intermediate) is an active-site residue. Catalysis depends on aspartate 201, which acts as the Proton donor. 233-234 (HE) serves as a coordination point for substrate. 262–263 (RG) provides a ligand contact to NADPH.

It belongs to the GTP cyclohydrolase I family. QueF type 2 subfamily. Homodimer.

The protein localises to the cytoplasm. The enzyme catalyses 7-aminomethyl-7-carbaguanine + 2 NADP(+) = 7-cyano-7-deazaguanine + 2 NADPH + 3 H(+). Its pathway is tRNA modification; tRNA-queuosine biosynthesis. Functionally, catalyzes the NADPH-dependent reduction of 7-cyano-7-deazaguanine (preQ0) to 7-aminomethyl-7-deazaguanine (preQ1). This chain is NADPH-dependent 7-cyano-7-deazaguanine reductase, found in Shewanella sp. (strain MR-4).